The chain runs to 335 residues: Methionine import ATP-binding protein MetN (335 aa).

One can recognise an ABC transporter domain in the interval 2 to 241; it reads IQFQRLHKSY…PKHATTRRFV (240 aa). 38-45 is a binding site for ATP; sequence GHSGAGKS.

The protein belongs to the ABC transporter superfamily. Methionine importer (TC 3.A.1.24) family. As to quaternary structure, the complex is composed of two ATP-binding proteins (MetN), two transmembrane proteins (MetI) and a solute-binding protein (MetQ).

It localises to the cell inner membrane. It carries out the reaction L-methionine(out) + ATP + H2O = L-methionine(in) + ADP + phosphate + H(+). The catalysed reaction is D-methionine(out) + ATP + H2O = D-methionine(in) + ADP + phosphate + H(+). Part of the ABC transporter complex MetNIQ involved in methionine import. Responsible for energy coupling to the transport system. In Xanthomonas euvesicatoria pv. vesicatoria (strain 85-10) (Xanthomonas campestris pv. vesicatoria), this protein is Methionine import ATP-binding protein MetN.